A 187-amino-acid polypeptide reads, in one-letter code: Protein GrpE (187 aa).

Residues 1-23 form a disordered region; the sequence is MNNEKELKKEETSVENKEKKVAT.

This sequence belongs to the GrpE family. In terms of assembly, homodimer.

The protein resides in the cytoplasm. In terms of biological role, participates actively in the response to hyperosmotic and heat shock by preventing the aggregation of stress-denatured proteins, in association with DnaK and GrpE. It is the nucleotide exchange factor for DnaK and may function as a thermosensor. Unfolded proteins bind initially to DnaJ; upon interaction with the DnaJ-bound protein, DnaK hydrolyzes its bound ATP, resulting in the formation of a stable complex. GrpE releases ADP from DnaK; ATP binding to DnaK triggers the release of the substrate protein, thus completing the reaction cycle. Several rounds of ATP-dependent interactions between DnaJ, DnaK and GrpE are required for fully efficient folding. The chain is Protein GrpE from Mesoplasma florum (strain ATCC 33453 / NBRC 100688 / NCTC 11704 / L1) (Acholeplasma florum).